The following is a 252-amino-acid chain: Imidazole glycerol phosphate synthase subunit HisF (252 aa).

Active-site residues include Asp-11 and Asp-130.

It belongs to the HisA/HisF family. In terms of assembly, heterodimer of HisH and HisF.

Its subcellular location is the cytoplasm. The enzyme catalyses 5-[(5-phospho-1-deoxy-D-ribulos-1-ylimino)methylamino]-1-(5-phospho-beta-D-ribosyl)imidazole-4-carboxamide + L-glutamine = D-erythro-1-(imidazol-4-yl)glycerol 3-phosphate + 5-amino-1-(5-phospho-beta-D-ribosyl)imidazole-4-carboxamide + L-glutamate + H(+). It functions in the pathway amino-acid biosynthesis; L-histidine biosynthesis; L-histidine from 5-phospho-alpha-D-ribose 1-diphosphate: step 5/9. Functionally, IGPS catalyzes the conversion of PRFAR and glutamine to IGP, AICAR and glutamate. The HisF subunit catalyzes the cyclization activity that produces IGP and AICAR from PRFAR using the ammonia provided by the HisH subunit. The chain is Imidazole glycerol phosphate synthase subunit HisF from Citrifermentans bemidjiense (strain ATCC BAA-1014 / DSM 16622 / JCM 12645 / Bem) (Geobacter bemidjiensis).